A 572-amino-acid polypeptide reads, in one-letter code: Phenylalanine--tRNA ligase beta subunit (572 aa).

Residues 278-353 (LTPKEFEVEF…IAYGYNEIKP (76 aa)) enclose the B5 domain. Mg(2+) is bound by residues aspartate 331, aspartate 337, glutamate 340, and aspartate 341.

The protein belongs to the phenylalanyl-tRNA synthetase beta subunit family. Type 2 subfamily. Tetramer of two alpha and two beta subunits. Mg(2+) is required as a cofactor.

The protein resides in the cytoplasm. The catalysed reaction is tRNA(Phe) + L-phenylalanine + ATP = L-phenylalanyl-tRNA(Phe) + AMP + diphosphate + H(+). The sequence is that of Phenylalanine--tRNA ligase beta subunit from Thermococcus onnurineus (strain NA1).